The following is a 91-amino-acid chain: Cell division protein FtsB (91 aa).

Residues 1 to 3 lie on the Cytoplasmic side of the membrane; it reads MKF. A helical membrane pass occupies residues 4-21; it reads IVGLLLVLLLALQYQLWI. The Periplasmic segment spans residues 22 to 91; it reads SKDGLGELRQ…ETFFQVVEEP (70 aa). Positions 26–74 form a coiled coil; sequence LGELRQLSRSIKQQRHENATLIERNQVLKAEVQDLKSGLDALEERARSG.

The protein belongs to the FtsB family. Part of a complex composed of FtsB, FtsL and FtsQ.

It is found in the cell inner membrane. In terms of biological role, essential cell division protein. May link together the upstream cell division proteins, which are predominantly cytoplasmic, with the downstream cell division proteins, which are predominantly periplasmic. The sequence is that of Cell division protein FtsB from Nitrosococcus oceani (strain ATCC 19707 / BCRC 17464 / JCM 30415 / NCIMB 11848 / C-107).